A 237-amino-acid chain; its full sequence is UDP-2,3-diacylglucosamine hydrolase (237 aa).

Mn(2+) is bound by residues Asp8, His10, Asp41, Asn78, and His113. 78 to 79 (NR) contacts substrate. Residues Asp121, Ser159, Gln164, and His195 each contribute to the substrate site. The Mn(2+) site is built by His195 and His197.

This sequence belongs to the LpxH family. Mn(2+) serves as cofactor.

The protein resides in the cell inner membrane. The enzyme catalyses UDP-2-N,3-O-bis[(3R)-3-hydroxytetradecanoyl]-alpha-D-glucosamine + H2O = 2-N,3-O-bis[(3R)-3-hydroxytetradecanoyl]-alpha-D-glucosaminyl 1-phosphate + UMP + 2 H(+). It participates in glycolipid biosynthesis; lipid IV(A) biosynthesis; lipid IV(A) from (3R)-3-hydroxytetradecanoyl-[acyl-carrier-protein] and UDP-N-acetyl-alpha-D-glucosamine: step 4/6. Its function is as follows. Hydrolyzes the pyrophosphate bond of UDP-2,3-diacylglucosamine to yield 2,3-diacylglucosamine 1-phosphate (lipid X) and UMP by catalyzing the attack of water at the alpha-P atom. Involved in the biosynthesis of lipid A, a phosphorylated glycolipid that anchors the lipopolysaccharide to the outer membrane of the cell. This chain is UDP-2,3-diacylglucosamine hydrolase, found in Chromobacterium violaceum (strain ATCC 12472 / DSM 30191 / JCM 1249 / CCUG 213 / NBRC 12614 / NCIMB 9131 / NCTC 9757 / MK).